A 289-amino-acid chain; its full sequence is Shikimate dehydrogenase (NADP(+)) (289 aa).

Shikimate-binding positions include 19-21 and T66; that span reads SLS. K70 acts as the Proton acceptor in catalysis. Residues N91 and D106 each contribute to the shikimate site. NADP(+) is bound by residues 131–135 and L229; that span reads GNGGA. A shikimate-binding site is contributed by Y231. Residue G252 coordinates NADP(+).

The protein belongs to the shikimate dehydrogenase family. In terms of assembly, homodimer.

It carries out the reaction shikimate + NADP(+) = 3-dehydroshikimate + NADPH + H(+). It functions in the pathway metabolic intermediate biosynthesis; chorismate biosynthesis; chorismate from D-erythrose 4-phosphate and phosphoenolpyruvate: step 4/7. In terms of biological role, involved in the biosynthesis of the chorismate, which leads to the biosynthesis of aromatic amino acids. Catalyzes the reversible NADPH linked reduction of 3-dehydroshikimate (DHSA) to yield shikimate (SA). The chain is Shikimate dehydrogenase (NADP(+)) from Trichormus variabilis (strain ATCC 29413 / PCC 7937) (Anabaena variabilis).